A 277-amino-acid polypeptide reads, in one-letter code: Adenylate kinase (277 aa).

ATP is bound at residue 53–58; it reads GAGKGT. The tract at residues 73–102 is NMP; the sequence is ATGDMLRAQVAAKTPLGREAKKIMDAGGLV. AMP contacts are provided by residues threonine 74, arginine 79, 100-102, 129-132, and glutamine 136; these read GLV and GFPR. The tract at residues 170–207 is LID; it reads GRLVHPASGRSYHKIFNPPKAPMTDDATGEPLIQRSDD. Residues arginine 171 and 180–181 contribute to the ATP site; that span reads SY. AMP-binding residues include arginine 204 and arginine 215. Glutamine 243 contacts ATP.

It belongs to the adenylate kinase family. AK2 subfamily. As to quaternary structure, monomer.

Its subcellular location is the cytoplasm. It localises to the cytosol. The protein localises to the mitochondrion intermembrane space. The catalysed reaction is AMP + ATP = 2 ADP. Functionally, catalyzes the reversible transfer of the terminal phosphate group between ATP and AMP. Plays an important role in cellular energy homeostasis and in adenine nucleotide metabolism. Adenylate kinase activity is critical for regulation of the phosphate utilization and the AMP de novo biosynthesis pathways. In Phaeosphaeria nodorum (strain SN15 / ATCC MYA-4574 / FGSC 10173) (Glume blotch fungus), this protein is Adenylate kinase.